Here is a 361-residue protein sequence, read N- to C-terminus: Myb/SANT-like DNA-binding domain-containing protein 7 (361 aa).

The Myb-like domain maps to 11 to 70 (RWSRQETRTLLSILGEAEYIQRLQTVHHNADVYQAVSKRMQQEGFRRTERQCRSKFKVLK). 2 disordered regions span residues 174-198 (TSDLEDSWDESSGAGCSQGTPSYSS) and 217-272 (RLGV…ARRR). 2 stretches are compositionally biased toward polar residues: residues 187-198 (AGCSQGTPSYSS) and 226-249 (PCTSTNRSTPGVASTPQTPVSSSR).

This Homo sapiens (Human) protein is Myb/SANT-like DNA-binding domain-containing protein 7.